Here is a 365-residue protein sequence, read N- to C-terminus: ATP-dependent (S)-NAD(P)H-hydrate dehydratase (365 aa).

A chloroplast-targeting transit peptide spans 1 to 43 (MLVKPSIISGLVRLTSHSPSSSSSVLRRQEFLVRTLCGSPIIR). Position 2 is an N-acetylserine (L2). The 309-residue stretch at 53–361 (AESVLRTVTP…ECLGESLEDI (309 aa)) folds into the YjeF C-terminal domain. (6S)-NADPHX contacts are provided by residues G169 and 222-228 (NVNEYKR). ATP-binding positions include 262 to 266 (KGKSD) and 281 to 290 (GSPRRCGGQG). D291 contributes to the (6S)-NADPHX binding site.

Belongs to the NnrD/CARKD family. Mg(2+) serves as cofactor.

Its subcellular location is the plastid. The protein localises to the chloroplast. It is found in the cytoplasm. It catalyses the reaction (6S)-NADHX + ATP = ADP + phosphate + NADH + H(+). It carries out the reaction (6S)-NADPHX + ATP = ADP + phosphate + NADPH + H(+). In terms of biological role, catalyzes the dehydration of the S-form of NAD(P)HX at the expense of ATP, which is converted to ADP. Together with NAD(P)HX epimerase, which catalyzes the epimerization of the S- and R-forms, the enzyme allows the repair of both epimers of NAD(P)HX, a damaged form of NAD(P)H that is a result of enzymatic or heat-dependent hydration. This is ATP-dependent (S)-NAD(P)H-hydrate dehydratase from Arabidopsis thaliana (Mouse-ear cress).